A 422-amino-acid polypeptide reads, in one-letter code: E3 ubiquitin-protein ligase CBLL2 (422 aa).

The RING-type zinc-finger motif lies at 54-94 (CDKCDLPIKIYGRIIPCKHAFCYNCANLYDKIGYKICPRCS). Residues 93 to 151 (CSYPVLRIEEHKRGSVFMCSVVQGCKRTYLSQKSLQAHIKRRHKRARKQVASASLEKLR) are HYB domain. A C2H2-type zinc finger spans residues 109 to 135 (FMCSVVQGCKRTYLSQKSLQAHIKRRH). Disordered stretches follow at residues 190-213 (MQQM…PELS) and 378-422 (QTDA…HRPY). Residues 195–205 (HEQHNQPHKDL) show a composition bias toward basic and acidic residues. Pro residues predominate over residues 393 to 405 (LPPPPPTWSPPPS). Over residues 410–422 (GSHHSYQRRHRPY) the composition is skewed to basic residues.

As to quaternary structure, homodimer.

Its subcellular location is the cytoplasm. The catalysed reaction is S-ubiquitinyl-[E2 ubiquitin-conjugating enzyme]-L-cysteine + [acceptor protein]-L-lysine = [E2 ubiquitin-conjugating enzyme]-L-cysteine + N(6)-ubiquitinyl-[acceptor protein]-L-lysine.. The protein operates within protein modification; protein ubiquitination. E3 ubiquitin ligase catalyzing the covalent attachment of ubiquitin moieties onto substrate proteins. May operate on tyrosine-phosphorylated SRC substrates. The sequence is that of E3 ubiquitin-protein ligase CBLL2 (CBLL2) from Macaca fascicularis (Crab-eating macaque).